A 592-amino-acid chain; its full sequence is A-type ATP synthase subunit A (592 aa).

233–240 (GPFGSGKT) contacts ATP.

It belongs to the ATPase alpha/beta chains family. Has multiple subunits with at least A(3), B(3), C, D, E, F, H, I and proteolipid K(x).

It localises to the cell membrane. The catalysed reaction is ATP + H2O + 4 H(+)(in) = ADP + phosphate + 5 H(+)(out). Its function is as follows. Component of the A-type ATP synthase that produces ATP from ADP in the presence of a proton gradient across the membrane. The A chain is the catalytic subunit. This is A-type ATP synthase subunit A from Saccharolobus islandicus (strain M.16.27) (Sulfolobus islandicus).